Reading from the N-terminus, the 198-residue chain is Phosphoheptose isomerase (198 aa).

One can recognise an SIS domain in the interval M36 to G198. Residue N51–G53 coordinates substrate. Residues H60 and E64 each coordinate Zn(2+). Residues E64, N93–D94, S119–S121, S124, and Q174 each bind substrate. Zn(2+)-binding residues include Q174 and H182.

This sequence belongs to the SIS family. GmhA subfamily. As to quaternary structure, homotetramer. Requires Zn(2+) as cofactor.

The protein resides in the cytoplasm. It carries out the reaction 2 D-sedoheptulose 7-phosphate = D-glycero-alpha-D-manno-heptose 7-phosphate + D-glycero-beta-D-manno-heptose 7-phosphate. It functions in the pathway carbohydrate biosynthesis; D-glycero-D-manno-heptose 7-phosphate biosynthesis; D-glycero-alpha-D-manno-heptose 7-phosphate and D-glycero-beta-D-manno-heptose 7-phosphate from sedoheptulose 7-phosphate: step 1/1. In terms of biological role, catalyzes the isomerization of sedoheptulose 7-phosphate in D-glycero-D-manno-heptose 7-phosphate. The protein is Phosphoheptose isomerase of Halorhodospira halophila (strain DSM 244 / SL1) (Ectothiorhodospira halophila (strain DSM 244 / SL1)).